The following is a 400-amino-acid chain: WW domain-containing transcription regulator protein 1 (400 aa).

Lysine 46 is covalently cross-linked (Glycyl lysine isopeptide (Lys-Gly) (interchain with G-Cter in ubiquitin)). Positions 52-117 (FFKEPDSGSH…QQHAHLRQQS (66 aa)) are disordered. The span at 61–70 (HSRQSSTDSS) shows a compositional bias: polar residues. Residues serine 62 and serine 89 each carry the phosphoserine modification. Residues 91–110 (PASLQLGPGAGAAGSPAQQH) are compositionally biased toward low complexity. The WW domain occupies 124 to 157 (LPLPPGWEMTFTATGQRYFLNHIEKITTWQDPRK). Residues 192–211 (NHQHQQQMAPTNLSQQNHPT) show a composition bias toward polar residues. The segment at 192–216 (NHQHQQQMAPTNLSQQNHPTQNPPA) is disordered. The segment at 222–400 (PNALTTQQQQ…NKSEPFLTWL (179 aa)) is required for interaction with PALS1. Serine 295 and serine 311 each carry phosphoserine. The short motif at 394–400 (EPFLTWL) is the PDZ-binding element.

As to quaternary structure, binds to SLC9A3R2 via the PDZ motif at the plasma membrane. Binds to YWHAZ in vivo and in vitro through the phosphoserine-binding motif RSHSSP. Interacts (via coiled-coil domain) with SMAD2 (via MH1 domain), SMAD3 and SMAD4. Interacts with MED15. Interacts with PAX8 and NKX2-1. Interacts with TEAD1, TEAD2, TEAD3 and TEAD4. Interacts (via WW domain) with PALS1. Interacts with LATS1. Interacts with YAP1 (when phosphorylated at 'Ser-112'). Interacts (via WW domain) with PRRG4 (via cytoplasmic domain). Interacts (via WW domain) with AMOTL2 (via PPXY motif); the interaction promotes WWTR1/TAZ localization to the cytoplasm and tight junctions, thereby inhibiting its transcriptional coactivator properties. Interacts (via WW domain) with AMOT; the interaction facilitates translocation of WWTR1/TAZ to the cytoplasm. Post-translationally, phosphorylated by LATS2 and STK3/MST2. Phosphorylation by LATS2 results in creation of 14-3-3 binding sites, retention in the cytoplasm, and functional inactivation. Phosphorylation results in the inhibition of transcriptional coactivation through YWHAZ-mediated nuclear export. In terms of processing, ubiquitinated at Lys-46; leading to proteasomal degradation. Deubiquitinated and stabilized by UCHL1 at Lys-46; leading to inhibition of osteoclastogenesis.

The protein localises to the cytoplasm. Its subcellular location is the nucleus. It is found in the cell membrane. It localises to the cell junction. The protein resides in the tight junction. Its function is as follows. Transcriptional coactivator which acts as a downstream regulatory target in the Hippo signaling pathway that plays a pivotal role in organ size control and tumor suppression by restricting proliferation and promoting apoptosis. The core of this pathway is composed of a kinase cascade wherein STK3/MST2 and STK4/MST1, in complex with its regulatory protein SAV1, phosphorylates and activates LATS1/2 in complex with its regulatory protein MOB1, which in turn phosphorylates and inactivates YAP1 oncoprotein and WWTR1/TAZ. WWTR1 enhances PAX8 and NKX2-1/TTF1-dependent gene activation. In conjunction with YAP1, involved in the regulation of TGFB1-dependent SMAD2 and SMAD3 nuclear accumulation. Plays a key role in coupling SMADs to the transcriptional machinery such as the mediator complex. Regulates embryonic stem-cell self-renewal, promotes cell proliferation and epithelial-mesenchymal transition. The chain is WW domain-containing transcription regulator protein 1 from Canis lupus familiaris (Dog).